Reading from the N-terminus, the 754-residue chain is 5-methyltetrahydropteroyltriglutamate--homocysteine methyltransferase (754 aa).

Residues 17-20 (RELK) and K117 contribute to the 5-methyltetrahydropteroyltri-L-glutamate site. Residues 431-433 (IGS) and E484 contribute to the L-homocysteine site. Residues 431 to 433 (IGS) and E484 contribute to the L-methionine site. 5-methyltetrahydropteroyltri-L-glutamate-binding positions include 515 to 516 (RC) and W561. An L-homocysteine-binding site is contributed by D599. L-methionine is bound at residue D599. E605 contributes to the 5-methyltetrahydropteroyltri-L-glutamate binding site. Zn(2+) contacts are provided by H641, C643, and E665. H694 functions as the Proton donor in the catalytic mechanism. Residue C726 coordinates Zn(2+).

This sequence belongs to the vitamin-B12 independent methionine synthase family. Zn(2+) serves as cofactor.

The enzyme catalyses 5-methyltetrahydropteroyltri-L-glutamate + L-homocysteine = tetrahydropteroyltri-L-glutamate + L-methionine. It functions in the pathway amino-acid biosynthesis; L-methionine biosynthesis via de novo pathway; L-methionine from L-homocysteine (MetE route): step 1/1. Catalyzes the transfer of a methyl group from 5-methyltetrahydrofolate to homocysteine resulting in methionine formation. This is 5-methyltetrahydropteroyltriglutamate--homocysteine methyltransferase from Salmonella paratyphi B (strain ATCC BAA-1250 / SPB7).